Consider the following 266-residue polypeptide: Anamorsin homolog (266 aa).

The interval 1-164 (MIINFVGNTL…NITAENPDFL (164 aa)) is N-terminal SAM-like domain. The tract at residues 165–185 (SNEDNDVSSDDEDLYNNEDDK) is linker. Residues Cys-229, Cys-232, Cys-240, and Cys-243 each contribute to the [4Fe-4S] cluster site. 2 consecutive short sequence motifs (cx2C motif) follow at residues 229–232 (CGNC) and 240–243 (CASC). The interval 229–243 (CGNCYLGDAFRCASC) is fe-S binding site B.

Belongs to the anamorsin family. As to quaternary structure, monomer. Requires [4Fe-4S] cluster as cofactor.

It is found in the cytoplasm. Its subcellular location is the mitochondrion intermembrane space. In terms of biological role, component of the cytosolic iron-sulfur (Fe-S) protein assembly (CIA) machinery. Required for the maturation of extramitochondrial Fe-S proteins. Part of an electron transfer chain functioning in an early step of cytosolic Fe-S biogenesis, facilitating the de novo assembly of a [4Fe-4S] cluster on the cytosolic Fe-S scaffold complex. Electrons are transferred from NADPH via a FAD- and FMN-containing diflavin oxidoreductase. Together with the diflavin oxidoreductase, also required for the assembly of the diferric tyrosyl radical cofactor of ribonucleotide reductase (RNR), probably by providing electrons for reduction during radical cofactor maturation in the catalytic small subunit. This is Anamorsin homolog from Plasmodium falciparum (isolate 3D7).